A 354-amino-acid polypeptide reads, in one-letter code: S-adenosylmethionine:tRNA ribosyltransferase-isomerase (354 aa).

This sequence belongs to the QueA family. As to quaternary structure, monomer.

It is found in the cytoplasm. The catalysed reaction is 7-aminomethyl-7-carbaguanosine(34) in tRNA + S-adenosyl-L-methionine = epoxyqueuosine(34) in tRNA + adenine + L-methionine + 2 H(+). It functions in the pathway tRNA modification; tRNA-queuosine biosynthesis. In terms of biological role, transfers and isomerizes the ribose moiety from AdoMet to the 7-aminomethyl group of 7-deazaguanine (preQ1-tRNA) to give epoxyqueuosine (oQ-tRNA). This chain is S-adenosylmethionine:tRNA ribosyltransferase-isomerase, found in Pseudomonas savastanoi pv. phaseolicola (strain 1448A / Race 6) (Pseudomonas syringae pv. phaseolicola (strain 1448A / Race 6)).